A 207-amino-acid polypeptide reads, in one-letter code: Small ribosomal subunit protein uS4 (207 aa).

The segment at 31 to 55 (KCKLDSKPGQHGRTSGARTSDYGTQ) is disordered. Positions 42 to 53 (GRTSGARTSDYG) are enriched in polar residues. The region spanning 97-157 (SRLDNVVYRM…EQKKKQARIL (61 aa)) is the S4 RNA-binding domain.

It belongs to the universal ribosomal protein uS4 family. In terms of assembly, part of the 30S ribosomal subunit. Contacts protein S5. The interaction surface between S4 and S5 is involved in control of translational fidelity.

In terms of biological role, one of the primary rRNA binding proteins, it binds directly to 16S rRNA where it nucleates assembly of the body of the 30S subunit. Functionally, with S5 and S12 plays an important role in translational accuracy. In Paraburkholderia xenovorans (strain LB400), this protein is Small ribosomal subunit protein uS4.